Consider the following 84-residue polypeptide: UPF0248 protein PF1300 (84 aa).

This sequence belongs to the UPF0248 family.

The protein is UPF0248 protein PF1300 of Pyrococcus furiosus (strain ATCC 43587 / DSM 3638 / JCM 8422 / Vc1).